A 270-amino-acid chain; its full sequence is Pyrroline-5-carboxylate reductase (270 aa).

It belongs to the pyrroline-5-carboxylate reductase family.

The protein localises to the cytoplasm. The catalysed reaction is L-proline + NADP(+) = (S)-1-pyrroline-5-carboxylate + NADPH + 2 H(+). The enzyme catalyses L-proline + NAD(+) = (S)-1-pyrroline-5-carboxylate + NADH + 2 H(+). It functions in the pathway amino-acid biosynthesis; L-proline biosynthesis; L-proline from L-glutamate 5-semialdehyde: step 1/1. Catalyzes the reduction of 1-pyrroline-5-carboxylate (PCA) to L-proline. This is Pyrroline-5-carboxylate reductase from Corynebacterium melassecola.